The sequence spans 71 residues: Palustrin-2AJ2 (71 aa).

Residues 1 to 22 (MFTLKKPLLVLLFLGTVSLSLC) form the signal peptide. Positions 23 to 40 (EQERAADDDEGEVIEEEV) are excised as a propeptide. A disulfide bridge connects residues C65 and C71.

Expressed by the skin glands.

The protein resides in the secreted. Its function is as follows. Displays broad-spectrum antibacterial activity against a range of Gram-positive and Gram-negative bacteria. Has low hemolytic activity, low cytotoxicity and low antioxidant activity. In Amolops jingdongensis (Chinese torrent frog), this protein is Palustrin-2AJ2.